Reading from the N-terminus, the 1032-residue chain is Calmodulin-binding transcription activator 3 (1032 aa).

The CG-1 DNA-binding region spans 15–141 (VGQILSEARH…YLEVKGSRVS (127 aa)). The segment at 146 to 197 (RMQRTEDAARSPQETGDALTSEHDGYASCSFNQNDHSNHSQTTDSASVNGFH) is disordered. Residues 174–195 (CSFNQNDHSNHSQTTDSASVNG) show a composition bias toward polar residues. Residue serine 272 is modified to Phosphoserine. ANK repeat units lie at residues 661 to 690 (GGQGVLHFAASLGYNWALEPTIIAGVSVDF), 694 to 723 (NGWTALHWAAFFGRERIIGSLIALGAAPGT), and 733 to 762 (SGSTPSDLAYANGHKGIAGYLSEYALRAHV). 2 consecutive IQ domains span residues 852-881 (VQAAAIRIQNKFRGYKGRKDYLITRQRIIK) and 875-904 (TRQRIIKIQAHVRGYQFRKNYRKIIWSVGV). Positions 900–922 (WSVGVLEKVILRWRRKGAGLRGF) are calmodulin-binding. The stretch at 945 to 987 (KQGRKQTEDRLQKALARVKSMVQYPEARDQYRRLLNVVNDIQE) forms a coiled coil. A Phosphoserine modification is found at serine 964.

This sequence belongs to the CAMTA family. Interacts with SR1IP1. Interacts with DSC1. In terms of processing, ubiquinated during pathogen infection. Ubiquitination leads to its subsequent proteasome-dependent degradation, thus allowing the establishment of plant defense response. In terms of tissue distribution, expressed in roots, stems, leaves, carpels, and siliques, but not in stigmas or other parts of the flower.

Its subcellular location is the nucleus. Functionally, transcription activator that binds to the DNA consensus sequence 5'-[ACG]CGCG[GTC]-3'. Binds calmodulin in a calcium-dependent manner in vitro. Regulates transcriptional activity in response to calcium signals. Involved in freezing tolerance in association with CAMTA1 and CAMTA2. Required for the cold-induced expression of DREB1B/CBF1, DREB1C/CBF2, ZAT12 and GOLS3. Involved in response to cold. Contributes together with CAMTA5 to the positive regulation of the cold-induced expression of DREB1A/CBF3, DREB1B/CBF1 and DREB1C/CBF2. Involved together with CAMTA2 and CAMTA4 in the positive regulation of a general stress response (GSR). Involved in the regulation of GSR amplitude downstream of MEKK1. Involved in the regulation of a set of genes involved in defense responses against pathogens. Involved in the regulation of both basal resistance and systemic acquired resistance (SAR). Acts as negative regulator of plant immunity. Binds to the promoter of the defense-related gene EDS1 and represses its expression. Binds to the promoter of the defense-related gene NDR1 and represses its expression. Involved in defense against insects. Required for tolerance to the generalist herbivore Trichoplusia ni, and contributes to the positive regulation of genes associated with glucosinolate metabolism. Required for tolerance to Bradysia impatiens larvae. Mediates herbivore-induced wound response. Required for wound-induced jasmonate accumulation. Involved in the regulation of ethylene-induced senescence by binding to the promoter of the senescence-inducer gene EIN3 and repressing its expression. In Arabidopsis thaliana (Mouse-ear cress), this protein is Calmodulin-binding transcription activator 3.